The chain runs to 84 residues: Small ribosomal subunit protein uS17 (84 aa).

Belongs to the universal ribosomal protein uS17 family. As to quaternary structure, part of the 30S ribosomal subunit.

Functionally, one of the primary rRNA binding proteins, it binds specifically to the 5'-end of 16S ribosomal RNA. The sequence is that of Small ribosomal subunit protein uS17 from Serratia proteamaculans (strain 568).